We begin with the raw amino-acid sequence, 315 residues long: Periplasmic [NiFeSe] hydrogenase small subunit (315 aa).

The tat-type signal signal peptide spans 1–32 (MSLSRREFVKLCSAGVAGLGISQIYHPGIVHA). [4Fe-4S] cluster is bound by residues Cys50, Cys53, Cys158, Cys196, His240, Cys243, Cys263, Cys269, Cys278, Cys290, Cys296, and Cys299.

The protein belongs to the [NiFe]/[NiFeSe] hydrogenase small subunit family. In terms of assembly, heterodimer of a large and a small subunit. It depends on [4Fe-4S] cluster as a cofactor. Post-translationally, predicted to be exported by the Tat system. The position of the signal peptide cleavage has been experimentally proven.

The protein localises to the periplasm. The enzyme catalyses H2 + A = AH2. In Desulfomicrobium baculatum (Desulfovibrio baculatus), this protein is Periplasmic [NiFeSe] hydrogenase small subunit.